A 128-amino-acid chain; its full sequence is MFS18 protein (128 aa).

The first 25 residues, methionine 1–alanine 25, serve as a signal peptide directing secretion. The disordered stretch occupies residues arginine 26 to proline 79. The span at leucine 52–isoleucine 68 shows a compositional bias: gly residues. A run of 11 repeats spans residues proline 64–serine 67, proline 64–glycine 75, proline 69–serine 72, proline 69–glycine 80, proline 74–serine 77, proline 79–glycine 82, serine 81–glycine 92, proline 86–serine 89, proline 91–glycine 94, proline 104–serine 107, and proline 113–proline 116. The 3 X approximate tandem repeats stretch occupies residues proline 64–glycine 92. Positions proline 64–proline 116 are 8 X 4 AA approximate repeats. Residues proline 69 to proline 79 show a composition bias toward low complexity. Gly residues predominate over residues phenylalanine 99–proline 113. Positions phenylalanine 99–proline 128 are disordered.

Enhanced expression in male flowers. Accumulates in the glumes and in anther walls, paleas and lemmas of mature florets.

The chain is MFS18 protein (MFS18) from Zea mays (Maize).